The primary structure comprises 782 residues: DnaJ homolog subfamily C member 16 (782 aa).

A signal peptide spans Met-1 to Ala-25. Residues Leu-26–Glu-535 lie on the Cytoplasmic side of the membrane. The J domain maps to Asp-29–Gly-93. A Thioredoxin domain is found at Phe-119–Pro-247. A helical; Anchor for type IV membrane protein transmembrane segment spans residues Met-536 to Val-556. The Extracellular portion of the chain corresponds to Gln-557–Asp-782. Positions Ser-562 to Ser-593 are disordered. The segment covering Asn-563 to Lys-582 has biased composition (basic and acidic residues). The span at Thr-583–Ser-593 shows a compositional bias: polar residues. Asn-631 is a glycosylation site (N-linked (GlcNAc...) asparagine).

It is found in the endoplasmic reticulum membrane. Functionally, plays an important role in regulating the size of autophagosomes during the formation process. The polypeptide is DnaJ homolog subfamily C member 16 (DNAJC16) (Homo sapiens (Human)).